The sequence spans 243 residues: 1-(5-phosphoribosyl)-5-[(5-phosphoribosylamino)methylideneamino] imidazole-4-carboxamide isomerase (243 aa).

Asp-9 serves as the catalytic Proton acceptor. The active-site Proton donor is Asp-131.

It belongs to the HisA/HisF family.

It localises to the cytoplasm. The catalysed reaction is 1-(5-phospho-beta-D-ribosyl)-5-[(5-phospho-beta-D-ribosylamino)methylideneamino]imidazole-4-carboxamide = 5-[(5-phospho-1-deoxy-D-ribulos-1-ylimino)methylamino]-1-(5-phospho-beta-D-ribosyl)imidazole-4-carboxamide. Its pathway is amino-acid biosynthesis; L-histidine biosynthesis; L-histidine from 5-phospho-alpha-D-ribose 1-diphosphate: step 4/9. The sequence is that of 1-(5-phosphoribosyl)-5-[(5-phosphoribosylamino)methylideneamino] imidazole-4-carboxamide isomerase from Campylobacter jejuni (strain RM1221).